Reading from the N-terminus, the 171-residue chain is Large ribosomal subunit protein bL17 (171 aa).

Positions 140-152 are enriched in basic and acidic residues; sequence KREIQTKAREEKR. Positions 140–171 are disordered; that stretch reads KREIQTKAREEKRATRKSNSAPVNKETTSKKK. Residues 156–165 are compositionally biased toward polar residues; the sequence is KSNSAPVNKE.

The protein belongs to the bacterial ribosomal protein bL17 family. In terms of assembly, part of the 50S ribosomal subunit. Contacts protein L32.

The protein is Large ribosomal subunit protein bL17 of Leptospira interrogans serogroup Icterohaemorrhagiae serovar Lai (strain 56601).